The chain runs to 459 residues: Ribulose bisphosphate carboxylase large chain (459 aa).

Residues Asn-98 and Thr-148 each contribute to the substrate site. Lys-150 serves as the catalytic Proton acceptor. Lys-152 provides a ligand contact to substrate. Mg(2+) is bound by residues Lys-176, Asp-178, and Glu-179. Lys-176 bears the N6-carboxylysine mark. The active-site Proton acceptor is the His-268. Substrate-binding residues include Arg-269, His-301, and Ser-353.

Belongs to the RuBisCO large chain family. Type I subfamily. In terms of assembly, heterohexadecamer of 8 large chains and 8 small chains. It depends on Mg(2+) as a cofactor.

Its subcellular location is the plastid. It localises to the chloroplast. The catalysed reaction is 2 (2R)-3-phosphoglycerate + 2 H(+) = D-ribulose 1,5-bisphosphate + CO2 + H2O. The enzyme catalyses D-ribulose 1,5-bisphosphate + O2 = 2-phosphoglycolate + (2R)-3-phosphoglycerate + 2 H(+). RuBisCO catalyzes two reactions: the carboxylation of D-ribulose 1,5-bisphosphate, the primary event in carbon dioxide fixation, as well as the oxidative fragmentation of the pentose substrate in the photorespiration process. Both reactions occur simultaneously and in competition at the same active site. The polypeptide is Ribulose bisphosphate carboxylase large chain (rbcL) (Calyptrosphaera sphaeroidea).